A 326-amino-acid polypeptide reads, in one-letter code: Cyclin-dependent kinase 6 (326 aa).

N-acetylmethionine is present on methionine 1. 2 positions are modified to phosphotyrosine: tyrosine 13 and tyrosine 24. One can recognise a Protein kinase domain in the interval 13-300; sequence YECVAEIGEG…AYGALNHPYF (288 aa). Residues 19–27 and lysine 43 contribute to the ATP site; that span reads IGEGAYGKV. 2 positions are modified to phosphothreonine: threonine 49 and threonine 70. Aspartate 145 (proton acceptor) is an active-site residue. At threonine 177 the chain carries Phosphothreonine. At lysine 264 the chain carries N6-acetyllysine. The residue at position 319 (serine 319) is a Phosphoserine. Phosphothreonine is present on threonine 325.

The protein belongs to the protein kinase superfamily. CMGC Ser/Thr protein kinase family. CDC2/CDKX subfamily. In terms of assembly, interaction with D-type G1 cyclins. Cyclin binding promotes enzyme activation by phosphorylation at Thr-177. Binds to RUNX1, CDKN2D, FBXO7 and CDKN2C/p18-INK4c. Forms a cytoplasmic complex with Hsp90/HSP90AB1 and CDC37. FBXO7-binding promotes D-type cyclin binding. In terms of processing, thr-177 phosphorylation and Tyr-24 dephosphorylation promotes kinase activity. In terms of tissue distribution, expressed in subgranular zone (SGZ) of the hippocampal dentate gyrus (DG) and the subventricular zone (SVZ) of the lateral ventricles whose neural precursor cells (NPC) give rise to dentate granule neurons and olfactory bulb (OB) interneurons, respectively. Expressed in the neuroepithelium of the cerebral cortex of the developing brain.

It localises to the cytoplasm. The protein resides in the nucleus. Its subcellular location is the cell projection. It is found in the ruffle. The protein localises to the cytoskeleton. It localises to the microtubule organizing center. The protein resides in the centrosome. It catalyses the reaction L-seryl-[protein] + ATP = O-phospho-L-seryl-[protein] + ADP + H(+). It carries out the reaction L-threonyl-[protein] + ATP = O-phospho-L-threonyl-[protein] + ADP + H(+). Activated by Thr-177 phosphorylation and Tyr-24 dephosphorylation. Rapidly down-regulated prior to cell differentiation (e.g. erythroid and osteoblast). Functionally, serine/threonine-protein kinase involved in the control of the cell cycle and differentiation; promotes G1/S transition. Phosphorylates pRB/RB1 and NPM1. Interacts with D-type G1 cyclins during interphase at G1 to form a pRB/RB1 kinase and controls the entrance into the cell cycle. Involved in initiation and maintenance of cell cycle exit during cell differentiation; prevents cell proliferation and negatively regulates cell differentiation, but is required for the proliferation of specific cell types (e.g. erythroid and hematopoietic cells). Essential for cell proliferation within the dentate gyrus of the hippocampus and the subventricular zone of the lateral ventricles. Required during thymocyte development. Promotes the production of newborn neurons, probably by modulating G1 length. Promotes, at least in astrocytes, changes in patterns of gene expression, changes in the actin cytoskeleton including loss of stress fibers, and enhanced motility during cell differentiation. Prevents myeloid differentiation by interfering with RUNX1 and reducing its transcription transactivation activity, but promotes proliferation of normal myeloid progenitors. Delays senescence. Promotes the proliferation of beta-cells in pancreatic islets of Langerhans. May play a role in the centrosome organization during the cell cycle phases. The sequence is that of Cyclin-dependent kinase 6 (Cdk6) from Mus musculus (Mouse).